A 125-amino-acid polypeptide reads, in one-letter code: Small ribosomal subunit protein uS12 (125 aa).

At Asp89 the chain carries 3-methylthioaspartic acid.

Belongs to the universal ribosomal protein uS12 family. Part of the 30S ribosomal subunit. Contacts proteins S8 and S17. May interact with IF1 in the 30S initiation complex.

Functionally, with S4 and S5 plays an important role in translational accuracy. In terms of biological role, interacts with and stabilizes bases of the 16S rRNA that are involved in tRNA selection in the A site and with the mRNA backbone. Located at the interface of the 30S and 50S subunits, it traverses the body of the 30S subunit contacting proteins on the other side and probably holding the rRNA structure together. The combined cluster of proteins S8, S12 and S17 appears to hold together the shoulder and platform of the 30S subunit. In Cupriavidus metallidurans (strain ATCC 43123 / DSM 2839 / NBRC 102507 / CH34) (Ralstonia metallidurans), this protein is Small ribosomal subunit protein uS12.